The following is a 630-amino-acid chain: Zinc finger protein 37 homolog (630 aa).

3 disordered regions span residues 1–45 (MSVS…SAAE), 77–172 (KPDM…PSKK), and 193–285 (HSRN…KHEK). A compositionally biased stretch (basic and acidic residues) spans 14–30 (ETVDRRRSAETTKEAGR). In terms of domain architecture, KRAB spans 32–103 (LEMAVSEPEA…KGKRPSQGCP (72 aa)). At serine 42 the chain carries Phosphoserine. The span at 110-122 (KQKETDGKVQKDD) shows a compositional bias: basic and acidic residues. The span at 161–172 (NNLHKKHVPSKK) shows a compositional bias: basic residues. Residues 193 to 206 (HSRNCVKRKSDAAK) are compositionally biased toward basic and acidic residues. Over residues 221-231 (KGKKQTGKKHE) the composition is skewed to basic residues. 2 stretches are compositionally biased toward basic and acidic residues: residues 232-243 (KLSSHSSSDKCN) and 260-274 (IKQD…HEKS). C2H2-type zinc fingers lie at residues 293-315 (YECN…QRVH) and 321-343 (YECN…QRTH). Residues 349-367 (YECIQCGKAHGHKHALTDH) form a C2H2-type 3; atypical zinc finger. C2H2-type zinc fingers lie at residues 377-399 (YECA…VRSH), 405-427 (YECK…VRTH), 433-455 (YECN…MRIH), 461-483 (FECN…QRTH), 489-511 (YKCN…MRTH), 517-539 (FECN…QRVH), 545-567 (YECN…QRTH), 573-595 (YECN…QRSH), and 601-623 (YECN…VKTH).

Belongs to the krueppel C2H2-type zinc-finger protein family. Expressed at low level in several tissues including fetal cartilage.

It is found in the nucleus. May be involved in transcriptional regulation. The polypeptide is Zinc finger protein 37 homolog (ZFP37) (Homo sapiens (Human)).